Consider the following 302-residue polypeptide: Oxygen-dependent coproporphyrinogen-III oxidase (302 aa).

Residue Ser-94 participates in substrate binding. Residues His-98 and His-108 each contribute to the a divalent metal cation site. Residue His-108 is the Proton donor of the active site. Residue 110-112 participates in substrate binding; it reads NVR. His-147 and His-177 together coordinate a divalent metal cation. Positions 242–277 are important for dimerization; that stretch reads YVEFNLVFDRGTLFGLQSGGRTESILMSMPPVANWR. 260 to 262 provides a ligand contact to substrate; the sequence is GGR.

It belongs to the aerobic coproporphyrinogen-III oxidase family. In terms of assembly, homodimer. A divalent metal cation serves as cofactor.

The protein resides in the cytoplasm. The catalysed reaction is coproporphyrinogen III + O2 + 2 H(+) = protoporphyrinogen IX + 2 CO2 + 2 H2O. It participates in porphyrin-containing compound metabolism; protoporphyrin-IX biosynthesis; protoporphyrinogen-IX from coproporphyrinogen-III (O2 route): step 1/1. In terms of biological role, involved in the heme biosynthesis. Catalyzes the aerobic oxidative decarboxylation of propionate groups of rings A and B of coproporphyrinogen-III to yield the vinyl groups in protoporphyrinogen-IX. In Ralstonia nicotianae (strain ATCC BAA-1114 / GMI1000) (Ralstonia solanacearum), this protein is Oxygen-dependent coproporphyrinogen-III oxidase.